Reading from the N-terminus, the 280-residue chain is Urease accessory protein UreD 1 (280 aa).

This sequence belongs to the UreD family. As to quaternary structure, ureD, UreF and UreG form a complex that acts as a GTP-hydrolysis-dependent molecular chaperone, activating the urease apoprotein by helping to assemble the nickel containing metallocenter of UreC. The UreE protein probably delivers the nickel.

The protein localises to the cytoplasm. In terms of biological role, required for maturation of urease via the functional incorporation of the urease nickel metallocenter. The sequence is that of Urease accessory protein UreD 1 from Brucella canis (strain ATCC 23365 / NCTC 10854 / RM-666).